A 559-amino-acid chain; its full sequence is Polypeptide N-acetylgalactosaminyltransferase 1 (559 aa).

Over 1–8 the chain is Cytoplasmic; it reads MRKFAYCK. A helical; Signal-anchor for type II membrane protein transmembrane segment spans residues 9–28; sequence VVLATSLIWVLLDMFLLLYF. Residues 29 to 559 are Lumenal-facing; the sequence is SECNKCDEKK…LRNVTLPEIF (531 aa). A disordered region spans residues 45–65; that stretch reads GDVLEPVQKPHEGPGEMGKPV. The N-linked (GlcNAc...) asparagine glycan is linked to asparagine 95. Cystine bridges form between cysteine 106–cysteine 339, cysteine 330–cysteine 408, cysteine 442–cysteine 459, cysteine 482–cysteine 497, and cysteine 523–cysteine 540. Residues 115 to 225 form a catalytic subdomain A region; sequence LPTTSVVIVF…VGWLEPLLAR (111 aa). Aspartate 156 and arginine 186 together coordinate substrate. 2 residues coordinate Mn(2+): aspartate 209 and histidine 211. Residues 285 to 347 are catalytic subdomain B; the sequence is PVRTPTMAGG…TCSHVGHVFR (63 aa). Tryptophan 316 contributes to the substrate binding site. Histidine 344 provides a ligand contact to Mn(2+). Residues arginine 347 and tyrosine 352 each coordinate substrate. Positions 429–551 constitute a Ricin B-type lectin domain; sequence FSLGEIRNVE…GSRSQQWLLR (123 aa). N-linked (GlcNAc...) asparagine glycosylation occurs at asparagine 552.

This sequence belongs to the glycosyltransferase 2 family. GalNAc-T subfamily. It depends on Mn(2+) as a cofactor. As to expression, widely expressed. Expressed in all tissues tested.

The protein localises to the golgi apparatus. Its subcellular location is the golgi stack membrane. It is found in the secreted. It catalyses the reaction L-seryl-[protein] + UDP-N-acetyl-alpha-D-galactosamine = a 3-O-[N-acetyl-alpha-D-galactosaminyl]-L-seryl-[protein] + UDP + H(+). The enzyme catalyses L-threonyl-[protein] + UDP-N-acetyl-alpha-D-galactosamine = a 3-O-[N-acetyl-alpha-D-galactosaminyl]-L-threonyl-[protein] + UDP + H(+). It participates in protein modification; protein glycosylation. Its function is as follows. Catalyzes the initial reaction in O-linked oligosaccharide biosynthesis, the transfer of an N-acetyl-D-galactosamine residue to a serine or threonine residue on the protein receptor. Has a broad spectrum of substrates such as apomucin-, MUC5AC-, MUC1- and MUC2-derived peptides. The polypeptide is Polypeptide N-acetylgalactosaminyltransferase 1 (Homo sapiens (Human)).